The primary structure comprises 609 residues: Large ribosomal subunit assembly factor BipA (609 aa).

The tr-type G domain maps to 3-198; sequence QNIRNIAIIA…AIIKYAPAPN (196 aa). Residues 15–20 and 128–131 each bind GTP; these read DHGKTT and NKID.

Belongs to the TRAFAC class translation factor GTPase superfamily. Classic translation factor GTPase family. BipA subfamily. In terms of assembly, monomer.

Its subcellular location is the cytoplasm. The catalysed reaction is GTP + H2O = GDP + phosphate + H(+). A 50S ribosomal subunit assembly protein with GTPase activity, required for 50S subunit assembly at low temperatures, may also play a role in translation. Binds GTP and analogs. Binds the 70S ribosome between the 30S and 50S subunits, in a similar position as ribosome-bound EF-G; it contacts a number of ribosomal proteins, both rRNAs and the A-site tRNA. The chain is Large ribosomal subunit assembly factor BipA from Buchnera aphidicola subsp. Schizaphis graminum (strain Sg).